The following is a 187-amino-acid chain: MTNPDHTCVGAISGSFGVRGEVRLKSFCAEPSDIGSYGPLSTEDGAQTYTITLTRPVKAGYAAMLSGVATKEDADALRGTRLYAPRSALPSLPDDEFYHADLVGLTVLDTGGEVIGTVASVANHGAGDILELSGPGLPSGLLIPFTLAVVPTVDIAAGRVIVDMPDGLIGGDKPDTSDTAPLGQDFD.

One can recognise a PRC barrel domain in the interval 94-168 (DDEFYHADLV…RVIVDMPDGL (75 aa)). A disordered region spans residues 167 to 187 (GLIGGDKPDTSDTAPLGQDFD).

Belongs to the RimM family. Binds ribosomal protein uS19.

The protein localises to the cytoplasm. Its function is as follows. An accessory protein needed during the final step in the assembly of 30S ribosomal subunit, possibly for assembly of the head region. Essential for efficient processing of 16S rRNA. May be needed both before and after RbfA during the maturation of 16S rRNA. It has affinity for free ribosomal 30S subunits but not for 70S ribosomes. The sequence is that of Ribosome maturation factor RimM from Jannaschia sp. (strain CCS1).